The following is a 171-amino-acid chain: Peptide deformylase 1 (171 aa).

C99 and H141 together coordinate Fe cation. Residue E142 is part of the active site. H145 contributes to the Fe cation binding site.

It belongs to the polypeptide deformylase family. Requires Fe(2+) as cofactor.

It catalyses the reaction N-terminal N-formyl-L-methionyl-[peptide] + H2O = N-terminal L-methionyl-[peptide] + formate. Its function is as follows. Removes the formyl group from the N-terminal Met of newly synthesized proteins. Requires at least a dipeptide for an efficient rate of reaction. N-terminal L-methionine is a prerequisite for activity but the enzyme has broad specificity at other positions. This Xanthomonas campestris pv. campestris (strain ATCC 33913 / DSM 3586 / NCPPB 528 / LMG 568 / P 25) protein is Peptide deformylase 1.